A 566-amino-acid chain; its full sequence is Arginine--tRNA ligase (566 aa).

The 'HIGH' region motif lies at 121–131 (ANPNGPFHIGH).

This sequence belongs to the class-I aminoacyl-tRNA synthetase family.

The protein resides in the cytoplasm. It carries out the reaction tRNA(Arg) + L-arginine + ATP = L-arginyl-tRNA(Arg) + AMP + diphosphate. This chain is Arginine--tRNA ligase, found in Methanococcus maripaludis (strain C7 / ATCC BAA-1331).